Consider the following 526-residue polypeptide: Probable lipid II flippase MurJ (526 aa).

Helical transmembrane passes span 35-55 (LMGT…PNLF), 58-78 (LFAE…HYSM), 96-116 (AIFT…ILGA), 137-157 (MFPY…LHSI), 160-180 (FVPS…SMYF), 190-210 (IAAA…QLIF), 235-255 (IIAL…NDLV), 281-301 (LLGI…SFHV), 313-333 (LITA…FVLF), 362-382 (WHSV…AFYA), 391-411 (IAGT…FIPL), 415-435 (GIAF…WMFL), 459-479 (LFSV…AYFF), and 489-509 (GVPL…LLLL).

The protein belongs to the MurJ/MviN family.

It is found in the cell inner membrane. It participates in cell wall biogenesis; peptidoglycan biosynthesis. In terms of biological role, involved in peptidoglycan biosynthesis. Transports lipid-linked peptidoglycan precursors from the inner to the outer leaflet of the cytoplasmic membrane. In Treponema pallidum (strain Nichols), this protein is Probable lipid II flippase MurJ.